A 256-amino-acid chain; its full sequence is MAVISMKQLLEAGVHFGHQTRRWNPKMAKYIFTERNGIHVIDLQQTVKLADQAYEFVRDAAANDAVILFVGTKKQAAEAVAEEAKRAGQYFINHRWLGGTLTNWGTIQKRIARLKEIKRMEEEGTFELLPKKEVALLNKQRARLEKFLGGIEDMPRIPDVMYVVDPHKEQIAVKEAKKLGIPVVAMVDTNADPDDIDVIIPANDDAIRAVKLITSKLADAVIEGRQGEDADVDFAQEAQADSIEEIVEVVEGSKND.

The protein belongs to the universal ribosomal protein uS2 family.

In Streptococcus agalactiae serotype Ia (strain ATCC 27591 / A909 / CDC SS700), this protein is Small ribosomal subunit protein uS2.